We begin with the raw amino-acid sequence, 316 residues long: MQILLANPRGFCAGVDRAISIVENALAIYGAPIYVRHEVVHNRYVVDSLRKRGAIFIEQISEVPDGAILIFSAHGVSQAVRNEAKSRDLTVFDATCPLVTKVHMEVARASRRGEESILIGHAGHPEVEGTMGQYSNPEGGMYLVESPEDVWTLNVKNEGKLSFMTQTTLSVDDTSDVIDALRKRFPKIVGPRKDDICYATTNRQEAVRALAEQADVVLVVGSKNSSNSNRLAELAQRMGRTAFLIDDAADIQEAWVKEAACVGVTAGASAPDILVQNVIARLREFGGGEAVTLEGREENIVFEVPKELRVDVREVE.

Residue Cys12 participates in [4Fe-4S] cluster binding. 2 residues coordinate (2E)-4-hydroxy-3-methylbut-2-enyl diphosphate: His41 and His74. Residues His41 and His74 each coordinate dimethylallyl diphosphate. His41 and His74 together coordinate isopentenyl diphosphate. Cys96 provides a ligand contact to [4Fe-4S] cluster. His124 serves as a coordination point for (2E)-4-hydroxy-3-methylbut-2-enyl diphosphate. His124 contacts dimethylallyl diphosphate. Position 124 (His124) interacts with isopentenyl diphosphate. The active-site Proton donor is Glu126. Position 167 (Thr167) interacts with (2E)-4-hydroxy-3-methylbut-2-enyl diphosphate. [4Fe-4S] cluster is bound at residue Cys197. Residues Ser225, Ser226, Asn227, and Ser269 each contribute to the (2E)-4-hydroxy-3-methylbut-2-enyl diphosphate site. Dimethylallyl diphosphate contacts are provided by Ser225, Ser226, Asn227, and Ser269. Residues Ser225, Ser226, Asn227, and Ser269 each contribute to the isopentenyl diphosphate site.

This sequence belongs to the IspH family. As to quaternary structure, homodimer. Requires [4Fe-4S] cluster as cofactor.

The catalysed reaction is isopentenyl diphosphate + 2 oxidized [2Fe-2S]-[ferredoxin] + H2O = (2E)-4-hydroxy-3-methylbut-2-enyl diphosphate + 2 reduced [2Fe-2S]-[ferredoxin] + 2 H(+). The enzyme catalyses dimethylallyl diphosphate + 2 oxidized [2Fe-2S]-[ferredoxin] + H2O = (2E)-4-hydroxy-3-methylbut-2-enyl diphosphate + 2 reduced [2Fe-2S]-[ferredoxin] + 2 H(+). It functions in the pathway isoprenoid biosynthesis; dimethylallyl diphosphate biosynthesis; dimethylallyl diphosphate from (2E)-4-hydroxy-3-methylbutenyl diphosphate: step 1/1. Its pathway is isoprenoid biosynthesis; isopentenyl diphosphate biosynthesis via DXP pathway; isopentenyl diphosphate from 1-deoxy-D-xylulose 5-phosphate: step 6/6. Its function is as follows. Catalyzes the conversion of 1-hydroxy-2-methyl-2-(E)-butenyl 4-diphosphate (HMBPP) into a mixture of isopentenyl diphosphate (IPP) and dimethylallyl diphosphate (DMAPP). Acts in the terminal step of the DOXP/MEP pathway for isoprenoid precursor biosynthesis. This Salmonella paratyphi B (strain ATCC BAA-1250 / SPB7) protein is 4-hydroxy-3-methylbut-2-enyl diphosphate reductase.